The chain runs to 919 residues: MFS-type transporter clz9 (919 aa).

Residues 1–11 (MAASTKPTTKL) are compositionally biased toward polar residues. A disordered region spans residues 1-33 (MAASTKPTTKLSTEEDDVSRRDSESSADFMKSN). Residues 69-89 (VVASFAAAISPFSTSTYYPVV) form a helical membrane-spanning segment. Asparagine 104 carries N-linked (GlcNAc...) asparagine glycosylation. Helical transmembrane passes span 132 to 152 (PMFLVCFVTYFVANVGLALQN), 192 to 212 (LIYATLGSTLGPFIGPVIGGL), and 222 to 242 (VFWFLLCMGTVFALLIFIFFG). Asparagine 260 is a glycosylation site (N-linked (GlcNAc...) asparagine). A run of 4 helical transmembrane segments spans residues 303–323 (FILSVSGGLLYAGYSSVTSVL), 333–353 (YDAVQVGLCYLPVGFGSLLAY), 393–413 (LGFVFPMILVCSGLLVAYGWQ), and 418–438 (APLAPILVTMFLIAIILTGVM). A glycan (N-linked (GlcNAc...) asparagine) is linked at asparagine 461. A helical membrane pass occupies residues 465-485 (LLLGAGAVAVVGPLNKSAGIG). The DDE-1 domain occupies 641 to 809 (REWVTLIQGI…FTSANICSSF (169 aa)). The segment at 840-897 (EAPWEAKTPSNRKKKQIQKRGTLTKGEGEDTLAQKEADQQIEREQRQGGEQSGRSRQA) is disordered. A compositionally biased stretch (basic and acidic residues) spans 865–886 (GEGEDTLAQKEADQQIEREQRQ). Over residues 887–896 (GGEQSGRSRQ) the composition is skewed to low complexity. Asparagine 915 is a glycosylation site (N-linked (GlcNAc...) asparagine).

The protein belongs to the major facilitator superfamily. CAR1 family.

It localises to the membrane. MFS-type transporter; part of the gene cluster that mediates the biosynthesis of squalestatin S1 (SQS1, also known as zaragozic acid A), a heavily oxidized fungal polyketide that offers potent cholesterol lowering activity by targeting squalene synthase (SS). This Cochliobolus lunatus (Filamentous fungus) protein is MFS-type transporter clz9.